The sequence spans 227 residues: Cytochrome c oxidase subunit 2 (227 aa).

Residues 1 to 14 are Mitochondrial intermembrane-facing; sequence MAYPFQLGLQDATS. A helical transmembrane segment spans residues 15-45; that stretch reads PIMEELLHFHDHTLMIVFLISSLVLYIITLM. At 46 to 59 the chain is on the mitochondrial matrix side; that stretch reads LTTKLTHTSTMDAQ. The helical transmembrane segment at 60 to 87 threads the bilayer; it reads EVETVWTILPAIILILIALPSLRILYMM. Over 88-227 the chain is Mitochondrial intermembrane; it reads DEINNPSLTV…YFETWSAVMV (140 aa). Positions 161, 196, 198, 200, 204, and 207 each coordinate Cu cation. Glu198 contributes to the Mg(2+) binding site. Position 218 is a phosphotyrosine (Tyr218).

It belongs to the cytochrome c oxidase subunit 2 family. In terms of assembly, component of the cytochrome c oxidase (complex IV, CIV), a multisubunit enzyme composed of 14 subunits. The complex is composed of a catalytic core of 3 subunits MT-CO1, MT-CO2 and MT-CO3, encoded in the mitochondrial DNA, and 11 supernumerary subunits COX4I, COX5A, COX5B, COX6A, COX6B, COX6C, COX7A, COX7B, COX7C, COX8 and NDUFA4, which are encoded in the nuclear genome. The complex exists as a monomer or a dimer and forms supercomplexes (SCs) in the inner mitochondrial membrane with NADH-ubiquinone oxidoreductase (complex I, CI) and ubiquinol-cytochrome c oxidoreductase (cytochrome b-c1 complex, complex III, CIII), resulting in different assemblies (supercomplex SCI(1)III(2)IV(1) and megacomplex MCI(2)III(2)IV(2)). Found in a complex with TMEM177, COA6, COX18, COX20, SCO1 and SCO2. Interacts with TMEM177 in a COX20-dependent manner. Interacts with COX20. Interacts with COX16. Requires Cu cation as cofactor.

The protein localises to the mitochondrion inner membrane. The catalysed reaction is 4 Fe(II)-[cytochrome c] + O2 + 8 H(+)(in) = 4 Fe(III)-[cytochrome c] + 2 H2O + 4 H(+)(out). Functionally, component of the cytochrome c oxidase, the last enzyme in the mitochondrial electron transport chain which drives oxidative phosphorylation. The respiratory chain contains 3 multisubunit complexes succinate dehydrogenase (complex II, CII), ubiquinol-cytochrome c oxidoreductase (cytochrome b-c1 complex, complex III, CIII) and cytochrome c oxidase (complex IV, CIV), that cooperate to transfer electrons derived from NADH and succinate to molecular oxygen, creating an electrochemical gradient over the inner membrane that drives transmembrane transport and the ATP synthase. Cytochrome c oxidase is the component of the respiratory chain that catalyzes the reduction of oxygen to water. Electrons originating from reduced cytochrome c in the intermembrane space (IMS) are transferred via the dinuclear copper A center (CU(A)) of subunit 2 and heme A of subunit 1 to the active site in subunit 1, a binuclear center (BNC) formed by heme A3 and copper B (CU(B)). The BNC reduces molecular oxygen to 2 water molecules using 4 electrons from cytochrome c in the IMS and 4 protons from the mitochondrial matrix. The protein is Cytochrome c oxidase subunit 2 (MT-CO2) of Vulpes vulpes (Red fox).